Here is a 224-residue protein sequence, read N- to C-terminus: Germin-like protein 8-4 (224 aa).

The N-terminal stretch at 1–23 is a signal peptide; it reads MASSSSLYLLAALLALASWQAIA. C33 and C48 are joined by a disulfide. The region spanning 70–213 is the Cupin type-1 domain; that stretch reads STMNKVGSNV…AFQVEKKVID (144 aa). The N-linked (GlcNAc...) asparagine glycan is linked to N78. Positions 111, 113, 118, and 158 each coordinate Mn(2+).

This sequence belongs to the germin family. As to quaternary structure, oligomer (believed to be a pentamer but probably hexamer).

It localises to the secreted. Its subcellular location is the extracellular space. The protein localises to the apoplast. Its function is as follows. Plays a role in broad-spectrum disease resistance. Probably has no oxalate oxidase activity even if the active site is conserved. This Oryza sativa subsp. japonica (Rice) protein is Germin-like protein 8-4 (GER1).